The primary structure comprises 338 residues: MEFLHESVALGVDLLILGLCAREYVHYKRTAKVLKAAPQYNIDGDLKSVVERQRDKKIPYAVIRGTVTPIGVPLRSSLVPSVSGVLQIVKLHEHRVTRGFAGFWTEQHKLLHESANEMPFELRNQSHGVEIVDALSAAVLDVDVVYDNYEPSNLSLFDHVFGFFSGVRQRGLQTTEEVLREGSFLTAIGELELDGDTLRMQPSNEGPLFLTTATKSTLIKRFEDAKTTTILKLVVCSTISAILVAFIAKKLYRKRKQEREEAKIRERLDTERRERRARSRPHTLSQDQLCVVCSTNPKEIILLPCGHVCLCEDCAQKISVTCPVCRGSIVSKAAAFIA.

Topologically, residues 1-3 (MEF) are cytoplasmic. A helical transmembrane segment spans residues 4–24 (LHESVALGVDLLILGLCAREY). Topologically, residues 25-227 (VHYKRTAKVL…LIKRFEDAKT (203 aa)) are mitochondrial intermembrane. Residues 228–248 (TTILKLVVCSTISAILVAFIA) form a helical membrane-spanning segment. Topologically, residues 249–338 (KKLYRKRKQE…IVSKAAAFIA (90 aa)) are cytoplasmic. An RING-type zinc finger spans residues 290 to 326 (CVVCSTNPKEIILLPCGHVCLCEDCAQKISVTCPVCR).

As to quaternary structure, interacts with Marf. In terms of processing, auto-ubiquitinated.

It is found in the mitochondrion outer membrane. The catalysed reaction is S-ubiquitinyl-[E2 ubiquitin-conjugating enzyme]-L-cysteine + [acceptor protein]-L-lysine = [E2 ubiquitin-conjugating enzyme]-L-cysteine + N(6)-ubiquitinyl-[acceptor protein]-L-lysine.. Its function is as follows. Exhibits weak E3 ubiquitin-protein ligase activity. E3 ubiquitin ligases accept ubiquitin from an E2 ubiquitin-conjugating enzyme in the form of a thioester and then directly transfer the ubiquitin to targeted substrates. Plays a role in the control of mitochondrial morphology by promoting mitochondrial fission. Negatively regulates the mitochondrial fusion protein marf by promoting its ubiquitination, acting in a pathway that is parallel to the park/pink1 regulatory pathway. In Drosophila melanogaster (Fruit fly), this protein is Mitochondrial E3 ubiquitin protein ligase 1.